The following is a 373-amino-acid chain: uncharacterized protein (373 aa).

This is an uncharacterized protein from Methanocaldococcus jannaschii (strain ATCC 43067 / DSM 2661 / JAL-1 / JCM 10045 / NBRC 100440) (Methanococcus jannaschii).